A 485-amino-acid chain; its full sequence is Solute carrier family 35 member F4 (485 aa).

Composition is skewed to polar residues over residues 32 to 42 (SQKSTTRSSVT) and 50 to 64 (CPSSHSSISRQLSPL). Disordered regions lie at residues 32 to 64 (SQKSTTRSSVTRCKPGPNCPSSHSSISRQLSPL) and 78 to 111 (QSRGSSGVCGRRVERQSRSGDDGTQTRPESSSQE). Residues 88–98 (RRVERQSRSGD) are compositionally biased toward basic and acidic residues. Residues 99 to 111 (DGTQTRPESSSQE) are compositionally biased toward polar residues. The next 10 membrane-spanning stretches (helical) occupy residues 129-149 (IWGLLIILSVSSSWVGTTQIV), 156-176 (FYCPFFMTWFSTNWNIMFFPV), 217-234 (APFSILWTLTNYLYLLAL), 241-261 (DVSALFCCNKAFVFLLSWIVL), 265-285 (FMGVRIVAAIMAITGIVMMAY), 294-314 (IIGVAFAVGSASTSALYKVLF), 329-349 (FVSTLGFFNLIFISFTPIILY), 359-381 (FAALPWGCLCGMAGLWLAFNILV), 383-405 (VGVVLTYPILISIGTVLSVPGNA), and 414-434 (VIFNVVRLAATIIICIGFLLM). The EamA domain maps to 225–285 (LTNYLYLLAL…AITGIVMMAY (61 aa)).

It belongs to the SLC35F solute transporter family.

The protein localises to the membrane. In terms of biological role, putative solute transporter. The sequence is that of Solute carrier family 35 member F4 (Slc35f4) from Mus musculus (Mouse).